The sequence spans 549 residues: RNA-induced transcriptional silencing complex protein tas3 (549 aa).

Disordered regions lie at residues Lys89–Ser111, Asp126–Ile184, Ile202–Ser225, Leu298–Lys361, and Ala381–Ser430. Residues Leu298–Gln307 are compositionally biased toward polar residues. 2 stretches are compositionally biased toward basic and acidic residues: residues Tyr328–Lys361 and Ser403–Thr416. The span at Leu419 to Ser430 shows a compositional bias: polar residues.

Ago1, chp1 and tas3 interact to form the core of the RNA-induced transcriptional silencing (RITS) complex. The RITS complex interacts with the RDRC complex via interaction between ago1 and hrr1. Clr4 has a role in mediating this interaction.

The protein localises to the nucleus. It localises to the cytoplasm. Its subcellular location is the cytoskeleton. It is found in the microtubule organizing center. The protein resides in the spindle pole body. Its function is as follows. Has a role in the RNA interference (RNAi) pathway which is important for heterochromatin formation and accurate chromosome segregation. A member of the RNA-induced transcriptional silencing (RITS) complex which is involved in the biosynthesis of dsRNA from primer siRNAs provided by the RNA-directed RNA polymerase (RDRC) complex. In Schizosaccharomyces pombe (strain 972 / ATCC 24843) (Fission yeast), this protein is RNA-induced transcriptional silencing complex protein tas3 (tas3).